The primary structure comprises 295 residues: Acetylglutamate kinase (295 aa).

Substrate contacts are provided by residues 66 to 67, Arg-88, and Asn-193; that span reads GG.

The protein belongs to the acetylglutamate kinase family. ArgB subfamily.

It is found in the cytoplasm. The enzyme catalyses N-acetyl-L-glutamate + ATP = N-acetyl-L-glutamyl 5-phosphate + ADP. Its pathway is amino-acid biosynthesis; L-arginine biosynthesis; N(2)-acetyl-L-ornithine from L-glutamate: step 2/4. Its function is as follows. Catalyzes the ATP-dependent phosphorylation of N-acetyl-L-glutamate. The protein is Acetylglutamate kinase of Rhizobium etli (strain CIAT 652).